Reading from the N-terminus, the 465-residue chain is Asparagine--tRNA ligase (465 aa).

This sequence belongs to the class-II aminoacyl-tRNA synthetase family. As to quaternary structure, homodimer.

The protein resides in the cytoplasm. The enzyme catalyses tRNA(Asn) + L-asparagine + ATP = L-asparaginyl-tRNA(Asn) + AMP + diphosphate + H(+). This is Asparagine--tRNA ligase from Clostridium perfringens (strain ATCC 13124 / DSM 756 / JCM 1290 / NCIMB 6125 / NCTC 8237 / Type A).